The chain runs to 167 residues: Small ribosomal subunit protein uS5 (167 aa).

The 64-residue stretch at 12-75 folds into the S5 DRBM domain; that stretch reads LQEKLIAVNR…EKARRNMVTV (64 aa).

The protein belongs to the universal ribosomal protein uS5 family. In terms of assembly, part of the 30S ribosomal subunit. Contacts proteins S4 and S8.

With S4 and S12 plays an important role in translational accuracy. Its function is as follows. Located at the back of the 30S subunit body where it stabilizes the conformation of the head with respect to the body. This chain is Small ribosomal subunit protein uS5, found in Shewanella sp. (strain W3-18-1).